Reading from the N-terminus, the 65-residue chain is Large ribosomal subunit protein bL35 (65 aa).

Positions 1–30 are disordered; it reads MPKMKTNRGAAKRFRKTASGRFKSKQSHLR. The span at 10 to 30 shows a compositional bias: basic residues; it reads AAKRFRKTASGRFKSKQSHLR.

It belongs to the bacterial ribosomal protein bL35 family.

The polypeptide is Large ribosomal subunit protein bL35 (Pseudoalteromonas atlantica (strain T6c / ATCC BAA-1087)).